The sequence spans 117 residues: Large ribosomal subunit protein bL20 (117 aa).

Belongs to the bacterial ribosomal protein bL20 family.

Binds directly to 23S ribosomal RNA and is necessary for the in vitro assembly process of the 50S ribosomal subunit. It is not involved in the protein synthesizing functions of that subunit. The chain is Large ribosomal subunit protein bL20 from Campylobacter jejuni subsp. jejuni serotype O:2 (strain ATCC 700819 / NCTC 11168).